The following is a 79-amino-acid chain: Cytochrome b (79 aa).

The next 3 helical transmembrane spans lie at 1–7 (SALFLAM), 31–52 (WLIR…YLHI), and 67–79 (WNIG…LTMA). Positions 37 and 51 each coordinate heme b.

Belongs to the cytochrome b family. In terms of assembly, the cytochrome bc1 complex contains 11 subunits: 3 respiratory subunits (MT-CYB, CYC1 and UQCRFS1), 2 core proteins (UQCRC1 and UQCRC2) and 6 low-molecular weight proteins (UQCRH/QCR6, UQCRB/QCR7, UQCRQ/QCR8, UQCR10/QCR9, UQCR11/QCR10 and a cleavage product of UQCRFS1). This cytochrome bc1 complex then forms a dimer. Heme b serves as cofactor.

The protein resides in the mitochondrion inner membrane. In terms of biological role, component of the ubiquinol-cytochrome c reductase complex (complex III or cytochrome b-c1 complex) that is part of the mitochondrial respiratory chain. The b-c1 complex mediates electron transfer from ubiquinol to cytochrome c. Contributes to the generation of a proton gradient across the mitochondrial membrane that is then used for ATP synthesis. This Dipodomys heermanni (Heermann's kangaroo rat) protein is Cytochrome b (MT-CYB).